The primary structure comprises 130 residues: Small ribosomal subunit protein uS9 (130 aa).

The tract at residues 109–130 (RAKERKKYGLKAARRAPQFSKR) is disordered. Over residues 111 to 130 (KERKKYGLKAARRAPQFSKR) the composition is skewed to basic residues.

The protein belongs to the universal ribosomal protein uS9 family.

This chain is Small ribosomal subunit protein uS9, found in Heliobacterium modesticaldum (strain ATCC 51547 / Ice1).